The chain runs to 259 residues: 3-oxo-5-alpha-steroid 4-dehydrogenase 1 (259 aa).

5 consecutive transmembrane segments (helical) span residues 12 to 29 (LLAA…AVFA), 86 to 106 (ILLA…PFLM), 111 to 131 (PMPL…GYLQ), 151 to 171 (FLIG…SDHI), and 209 to 229 (YALA…FCFL).

This sequence belongs to the steroid 5-alpha reductase family. Liver and prostate (at a low level).

Its subcellular location is the microsome membrane. It localises to the endoplasmic reticulum membrane. It catalyses the reaction a 3-oxo-5alpha-steroid + NADP(+) = a 3-oxo-Delta(4)-steroid + NADPH + H(+). The catalysed reaction is androst-4-ene-3,17-dione + NADPH + H(+) = 5alpha-androstan-3,17-dione + NADP(+). It carries out the reaction 5alpha-pregnane-3,20-dione + NADP(+) = progesterone + NADPH + H(+). The enzyme catalyses 17beta-hydroxy-5alpha-androstan-3-one + NADP(+) = testosterone + NADPH + H(+). Functionally, converts testosterone into 5-alpha-dihydrotestosterone and progesterone or corticosterone into their corresponding 5-alpha-3-oxosteroids. It plays a central role in sexual differentiation and androgen physiology. The polypeptide is 3-oxo-5-alpha-steroid 4-dehydrogenase 1 (Homo sapiens (Human)).